The chain runs to 207 residues: Transcriptional regulator GfcR (207 aa).

The protein belongs to the purine/pyrimidine phosphoribosyltransferase family. GfcR subfamily.

In Methanocella arvoryzae (strain DSM 22066 / NBRC 105507 / MRE50), this protein is Transcriptional regulator GfcR.